Here is a 193-residue protein sequence, read N- to C-terminus: Ion-translocating oxidoreductase complex subunit A (193 aa).

6 helical membrane-spanning segments follow: residues 5 to 25 (LLLF…FLGL), 39 to 59 (IGMG…SWLM), 62 to 82 (FILV…LVIA), 102 to 122 (LLGI…VALL), 134 to 154 (AVYG…FAAI), and 171 to 191 (SIGL…SGLV).

The protein belongs to the NqrDE/RnfAE family. As to quaternary structure, the complex is composed of six subunits: RnfA, RnfB, RnfC, RnfD, RnfE and RnfG.

The protein resides in the cell inner membrane. Part of a membrane-bound complex that couples electron transfer with translocation of ions across the membrane. This is Ion-translocating oxidoreductase complex subunit A from Proteus mirabilis (strain HI4320).